The sequence spans 553 residues: Cytochrome P450 86A2 (553 aa).

A helical membrane pass occupies residues 2–20 (DVSNTMLLVAVVAAYWLWF). Cys-459 serves as a coordination point for heme.

It belongs to the cytochrome P450 family. It depends on heme as a cofactor. In terms of tissue distribution, expressed in leaves, stems, flowers and siliques. Expressed at low levels in roots. Expressed in guard cells of cotyledons and leaves.

It localises to the membrane. The enzyme catalyses an organic molecule + reduced [NADPH--hemoprotein reductase] + O2 = an alcohol + oxidized [NADPH--hemoprotein reductase] + H2O + H(+). Functionally, catalyzes the omega-hydroxylation of various fatty acids (FA). Acts on saturated and unsaturated fatty acids with chain lengths from C12 to C18. Plays a major role in the biosynthesis of extracellular lipids. Involved in the biosynthesis of hydroxylated fatty acids required for cutin biosynthesis, cuticle development and repression of bacterial type III gene expression. This is Cytochrome P450 86A2 (CYP86A2) from Arabidopsis thaliana (Mouse-ear cress).